The sequence spans 114 residues: Fumarate reductase subunit D (114 aa).

Transmembrane regions (helical) follow at residues 27 to 47 (ICFP…LVPV), 50 to 70 (IVAF…TIFP), and 94 to 114 (WVFY…VIAL).

This sequence belongs to the FrdD family. In terms of assembly, part of an enzyme complex containing four subunits: a flavoprotein (FrdA), an iron-sulfur protein (FrdB), and two hydrophobic anchor proteins (FrdC and FrdD).

The protein localises to the cell inner membrane. In terms of biological role, anchors the catalytic components of the fumarate reductase complex to the cell membrane, binds quinones. This is Fumarate reductase subunit D from Actinobacillus pleuropneumoniae serotype 3 (strain JL03).